Consider the following 553-residue polypeptide: Glucose-6-phosphate isomerase (553 aa).

The active-site Proton donor is Glu357. Residues His388 and Lys514 contribute to the active site. Residues 524–553 are disordered; it reads ITGAGSPPPQSDSSTDGLVRRYRTERGRAG. The span at 541–553 shows a compositional bias: basic and acidic residues; sequence LVRRYRTERGRAG.

Belongs to the GPI family.

It localises to the cytoplasm. The enzyme catalyses alpha-D-glucose 6-phosphate = beta-D-fructose 6-phosphate. Its pathway is carbohydrate biosynthesis; gluconeogenesis. It participates in carbohydrate degradation; glycolysis; D-glyceraldehyde 3-phosphate and glycerone phosphate from D-glucose: step 2/4. In terms of biological role, catalyzes the reversible isomerization of glucose-6-phosphate to fructose-6-phosphate. This Mycobacterium bovis (strain BCG / Tokyo 172 / ATCC 35737 / TMC 1019) protein is Glucose-6-phosphate isomerase.